Here is an 80-residue protein sequence, read N- to C-terminus: Small ribosomal subunit protein bS18 (80 aa).

It belongs to the bacterial ribosomal protein bS18 family. In terms of assembly, part of the 30S ribosomal subunit. Forms a tight heterodimer with protein bS6.

Binds as a heterodimer with protein bS6 to the central domain of the 16S rRNA, where it helps stabilize the platform of the 30S subunit. This chain is Small ribosomal subunit protein bS18, found in Acholeplasma laidlawii (strain PG-8A).